The following is a 188-amino-acid chain: Peptidyl-tRNA hydrolase (188 aa).

Y16 lines the tRNA pocket. H21 serves as the catalytic Proton acceptor. TRNA is bound by residues F66, N68, and N114.

This sequence belongs to the PTH family. As to quaternary structure, monomer.

It is found in the cytoplasm. The enzyme catalyses an N-acyl-L-alpha-aminoacyl-tRNA + H2O = an N-acyl-L-amino acid + a tRNA + H(+). In terms of biological role, hydrolyzes ribosome-free peptidyl-tRNAs (with 1 or more amino acids incorporated), which drop off the ribosome during protein synthesis, or as a result of ribosome stalling. Catalyzes the release of premature peptidyl moieties from peptidyl-tRNA molecules trapped in stalled 50S ribosomal subunits, and thus maintains levels of free tRNAs and 50S ribosomes. The sequence is that of Peptidyl-tRNA hydrolase from Citrifermentans bemidjiense (strain ATCC BAA-1014 / DSM 16622 / JCM 12645 / Bem) (Geobacter bemidjiensis).